A 187-amino-acid chain; its full sequence is Dirigent protein 6 (187 aa).

The first 29 residues, 1–29 (MAFLVEKQLFKALFSFFLLVLLFSDTVLS), serve as a signal peptide directing secretion. Cys-40 and Cys-186 form a disulfide bridge. Residues Asn-59 and Asn-123 are each glycosylated (N-linked (GlcNAc...) asparagine).

Belongs to the plant dirigent protein family. As to quaternary structure, homodimer. As to expression, expressed in roots, cotyledon veins, leaf trichomes, flowers, siliques, and meristems. Present in interfascicular/vascular cambia and developing xylem.

The protein resides in the secreted. It localises to the extracellular space. Its subcellular location is the apoplast. Dirigent proteins impart stereoselectivity on the phenoxy radical-coupling reaction, yielding optically active lignans from two molecules of coniferyl alcohol in the biosynthesis of lignans, flavonolignans, and alkaloids and thus plays a central role in plant secondary metabolism. Enantiocomplementary dirigent protein that mediates the laccase-catalyzed enantioselective oxidative phenol coupling of (E)-coniferyl alcohol to (-)-pinoresinol. The polypeptide is Dirigent protein 6 (DIR6) (Arabidopsis thaliana (Mouse-ear cress)).